The primary structure comprises 232 residues: Putative caffeoyl-CoA O-methyltransferase At1g67980 (232 aa).

Residue Lys-8 coordinates substrate. Residues Val-52, Glu-74, Gly-76–Val-77, Ser-82, and Asp-100 contribute to the S-adenosyl-L-methionine site. Substrate is bound at residue Asp-149. Asp-149 contributes to the a divalent metal cation binding site. Residue Asp-151 participates in S-adenosyl-L-methionine binding. A divalent metal cation-binding residues include Asp-175 and Asn-176.

It belongs to the class I-like SAM-binding methyltransferase superfamily. Cation-dependent O-methyltransferase family. CCoAMT subfamily. Requires a divalent metal cation as cofactor.

The catalysed reaction is (E)-caffeoyl-CoA + S-adenosyl-L-methionine = (E)-feruloyl-CoA + S-adenosyl-L-homocysteine + H(+). The protein operates within aromatic compound metabolism; phenylpropanoid biosynthesis. In terms of biological role, methylates caffeoyl-CoA to feruloyl-CoA and 5-hydroxyferuloyl-CoA to sinapoyl-CoA. Plays a role in the synthesis of feruloylated polysaccharides. Involved in the reinforcement of the plant cell wall. Also involved in the responding to wounding or pathogen challenge by the increased formation of cell wall-bound ferulic acid polymers. The sequence is that of Putative caffeoyl-CoA O-methyltransferase At1g67980 from Arabidopsis thaliana (Mouse-ear cress).